The primary structure comprises 103 residues: Large ribosomal subunit protein bL21 (103 aa).

This sequence belongs to the bacterial ribosomal protein bL21 family. In terms of assembly, part of the 50S ribosomal subunit. Contacts protein L20.

Its function is as follows. This protein binds to 23S rRNA in the presence of protein L20. The protein is Large ribosomal subunit protein bL21 of Shewanella baltica (strain OS223).